Consider the following 325-residue polypeptide: MEKYIIKLKNKVLREKEISYEEALNLISLDTNNKNDFDILLKSANEIREYFMGRKADLCTIMNAKSGKCSEDCKFCAQSSYYKTGVEEYSLLDYNEILNRAKEMESKGVHRFSLVTSGKGMSGKEFNNILNIYEGLRENTNLKLCASLGIIDYEQAKMLKSAGVTTYHHNVETCRDNFHNICTTHTYKDRIKTIKDAKKAGLDVCVGGIIGMNESEEQRLKMAFEIRELNVKSFPINILNPIKNTPMENYDVLEPMEILKTTAVFRFIIPNVYIRYAGGRLSLKGYDKVGFNGGVNSAIVGDYLTTVGSGIENDKKMIIEQGFEL.

In terms of domain architecture, Radical SAM core spans 51 to 280; that stretch reads FMGRKADLCT…NVYIRYAGGR (230 aa). The [4Fe-4S] cluster site is built by Cys69, Cys73, and Cys76. The [2Fe-2S] cluster site is built by Ser113, Cys145, Cys205, and Arg275.

Belongs to the radical SAM superfamily. Biotin synthase family. In terms of assembly, homodimer. [4Fe-4S] cluster is required as a cofactor. The cofactor is [2Fe-2S] cluster.

It catalyses the reaction (4R,5S)-dethiobiotin + (sulfur carrier)-SH + 2 reduced [2Fe-2S]-[ferredoxin] + 2 S-adenosyl-L-methionine = (sulfur carrier)-H + biotin + 2 5'-deoxyadenosine + 2 L-methionine + 2 oxidized [2Fe-2S]-[ferredoxin]. Its pathway is cofactor biosynthesis; biotin biosynthesis; biotin from 7,8-diaminononanoate: step 2/2. Its function is as follows. Catalyzes the conversion of dethiobiotin (DTB) to biotin by the insertion of a sulfur atom into dethiobiotin via a radical-based mechanism. The sequence is that of Biotin synthase from Clostridioides difficile (strain 630) (Peptoclostridium difficile).